Reading from the N-terminus, the 125-residue chain is Large ribosomal subunit protein bL12 (125 aa).

It belongs to the bacterial ribosomal protein bL12 family. In terms of assembly, homodimer. Part of the ribosomal stalk of the 50S ribosomal subunit. Forms a multimeric L10(L12)X complex, where L10 forms an elongated spine to which 2 to 4 L12 dimers bind in a sequential fashion. Binds GTP-bound translation factors.

Its function is as follows. Forms part of the ribosomal stalk which helps the ribosome interact with GTP-bound translation factors. Is thus essential for accurate translation. The polypeptide is Large ribosomal subunit protein bL12 (Azoarcus sp. (strain BH72)).